Reading from the N-terminus, the 1052-residue chain is SWI/SNF-related matrix-associated actin-dependent regulator of chromatin subfamily A member 5 (1052 aa).

Positions 1–15 (MSSAAEPPPPPPPES) are enriched in pro residues. The tract at residues 1–83 (MSSAAEPPPP…QEPDPTYEEK (83 aa)) is disordered. Position 2 is an N-acetylserine (S2). Positions 16–55 (APSKPAASIASGGSNSSNKGGPEGVAAQAVASAASAGPAD) are enriched in low complexity. At S66 the chain carries Phosphoserine. Positions 69-83 (KQKEIQEPDPTYEEK) are enriched in basic and acidic residues. K83 is covalently cross-linked (Glycyl lysine isopeptide (Lys-Gly) (interchain with G-Cter in SUMO2)). At T113 the chain carries Phosphothreonine. Phosphoserine is present on residues S116, S137, and S171. In terms of domain architecture, Helicase ATP-binding spans 192–357 (ISLYENGING…WSLLNFLLPD (166 aa)). 205–212 (DEMGLGKT) is an ATP binding site. The DEAH box signature appears at 308–311 (DEAH). K440 bears the N6-acetyllysine mark. The Helicase C-terminal domain maps to 487–638 (VLDKLLPKLK…SIVIQQGRLV (152 aa)). Glycyl lysine isopeptide (Lys-Gly) (interchain with G-Cter in SUMO2) cross-links involve residues K644, K647, K694, K722, and K735. A phosphoserine mark is found at S755 and S825. 2 consecutive SANT domains span residues 840–892 (QGFT…ERCN) and 943–1007 (KGKN…LITL). K966 is covalently cross-linked (Glycyl lysine isopeptide (Lys-Gly) (interchain with G-Cter in SUMO2)). Positions 1015–1052 (LEEKEKAEKKKRGPKPSTQKRKMDGAPDGRGRKKKLKL) are disordered. Positions 1023-1034 (KKKRGPKPSTQK) are enriched in basic residues. The span at 1035-1044 (RKMDGAPDGR) shows a compositional bias: basic and acidic residues.

Belongs to the SNF2/RAD54 helicase family. ISWI subfamily. As to quaternary structure, component of the ACF-5 ISWI chromatin-remodeling complex (also called the ACF/WCRF complex) at least composed of SMARCA5/SNF2H and BAZ1A/ACF1, which regulates the spacing of histone octamers on the DNA template to facilitate access to DNA. Within the complex interacts with BAZ1A/ACF1; the interaction is direct and is required to slide nucleosomes from end to center positions on a DNA template in an ATP-dependent manner. Component of the CHRAC ISWI chromatin-remodeling complex at least composed of SMARCA5/SNF2H, BAZ1A/ACF1, CHRAC1 and POLE3; the complex preferentially binds DNA through the CHRAC1-POLE3 heterodimer and possesses ATP-dependent nucleosome-remodeling activity. Within the complex interacts with BAZ1A/ACF1; the interaction is direct and promotes the interaction with the POLE3-CHRAC1 heterodimer. Within the complex interacts with the POLE3-CHRAC1 heterodimer; the interaction is direct and enhances nucleosome sliding activity by the SMARCA5/SNF2H and BAZ1A/ACF1 interaction. Neither POLE3 nor CHRAC1 enhances nucleosome sliding activity of the ACF-5 ISWI chromatin remodeling complex. Component of the WICH-5 ISWI chromatin-remodeling complex (also called the WICH complex) at least composed of SMARCA5/SNF2H and BAZ1B/WSTF, which regulates the spacing of histone octamers on the DNA template to facilitate access to DNA. Within the complex interacts with BAZ1B/WSTF. Component of the NoRC-5 ISWI chromatin-remodeling complex (also called the NoRC chromatin-remodeling complex) at least composed of SMARCA5/SNF2H and BAZ2A/TIP5; the complex suppresses rDNA transcription by a combination of nucleosome remodeling, histone deacetylation, and DNA methylation. Within the complex interacts with BAZ2A/TIP5. Within the complex interacts with HDAC1. Component of the BRF-5 ISWI chromatin-remodeling complex at least composed of SMARCA5/SNF2H and BAZ2B. Within the complex interacts with BAZ2B. Component of the NURF-5 ISWI chromatin-remodeling complex at least composed of SMARCA5/SNF2H and BPTF. Within the complex interacts with BPFT. Component of the CERF-5 ISWI chromatin-remodeling complex at least composed of SMARCA5/SNF2H and CECR2. LUZP1 is detected as part of the CERF-5 complex in embryonic stem cells where it is involved in complex stabilization but is not detected in the complex in the testis. Within the complex interacts with CECR2. Component of the RSF-5 ISWI chromatin-remodeling complex (also called the RSF complex) at least composed of SMARCA5/SNF2H and RSF1. Within the complex interacts with RSF1. Interacts with the cohesin complex component RAD21; the interaction is direct. Interacts with the NuRD complex components HDAC2, RBBP4 and CHD4; the interactions are direct. Interacts with PCNA. Component of the B-WICH complex, at least composed of SMARCA5/SNF2H, BAZ1B/WSTF, SF3B1, DEK, MYO1C, ERCC6, MYBBP1A and DDX21 which positively regulates RNA polymerase III transcription. Interacts with MYO1C. Interacts with BEND3. Interacts with SIRT6; promoting recruitment to DNA damage sites. (Microbial infection) Interacts with JC virus small t antigen. In terms of assembly, (Microbial infection) Interacts with Epstein Barr virus (EBV) lytic switch protein BZLF1; this interaction participates to the activation of early lytic viral genes by BZLF1. As to expression, ubiquitously expressed.

The protein resides in the nucleus. The protein localises to the chromosome. It catalyses the reaction ATP + H2O = ADP + phosphate + H(+). Its function is as follows. ATPase that possesses intrinsic ATP-dependent nucleosome-remodeling activity. Catalytic subunit of ISWI chromatin-remodeling complexes, which form ordered nucleosome arrays on chromatin and facilitate access to DNA during DNA-templated processes such as DNA replication, transcription, and repair; this may require intact histone H4 tails. Within the ISWI chromatin-remodeling complexes, slides edge- and center-positioned histone octamers away from their original location on the DNA template. Catalytic activity and histone octamer sliding propensity is regulated and determined by components of the ISWI chromatin-remodeling complexes. The BAZ1A/ACF1-, BAZ1B/WSTF-, BAZ2A/TIP5- and BAZ2B-containing ISWI chromatin-remodeling complexes regulate the spacing of nucleosomes along the chromatin and have the ability to slide mononucleosomes to the center of a DNA template in an ATP-dependent manner. The CECR2- and RSF1-containing ISWI chromatin-remodeling complexes do not have the ability to slide mononucleosomes to the center of a DNA template. Binds to core histones together with RSF1, and is required for the assembly of regular nucleosome arrays by the RSF-5 ISWI chromatin-remodeling complex. Involved in DNA replication and together with BAZ1A/ACF1 is required for replication of pericentric heterochromatin in S-phase. Probably plays a role in repression of RNA polymerase I dependent transcription of the rDNA locus, through the recruitment of the SIN3/HDAC1 corepressor complex to the rDNA promoter. Essential component of the WICH-5 ISWI chromatin-remodeling complex (also called the WICH complex), a chromatin-remodeling complex that mobilizes nucleosomes and reconfigures irregular chromatin to a regular nucleosomal array structure. The WICH-5 ISWI chromatin-remodeling complex regulates the transcription of various genes, has a role in RNA polymerase I transcription. Within the B-WICH complex has a role in RNA polymerase III transcription. Mediates the histone H2AX phosphorylation at 'Tyr-142', and is involved in the maintenance of chromatin structures during DNA replication processes. Essential component of NoRC-5 ISWI chromatin-remodeling complex, a complex that mediates silencing of a fraction of rDNA by recruiting histone-modifying enzymes and DNA methyltransferases, leading to heterochromatin formation and transcriptional silencing. The polypeptide is SWI/SNF-related matrix-associated actin-dependent regulator of chromatin subfamily A member 5 (Homo sapiens (Human)).